Consider the following 144-residue polypeptide: Large ribosomal subunit protein uL13 (144 aa).

This sequence belongs to the universal ribosomal protein uL13 family. As to quaternary structure, part of the 50S ribosomal subunit.

This protein is one of the early assembly proteins of the 50S ribosomal subunit, although it is not seen to bind rRNA by itself. It is important during the early stages of 50S assembly. This Clostridium tetani (strain Massachusetts / E88) protein is Large ribosomal subunit protein uL13.